The following is a 304-amino-acid chain: Homoserine O-acetyltransferase (304 aa).

The active-site Acyl-thioester intermediate is the Cys142. Substrate-binding residues include Lys163 and Ser191. Catalysis depends on His234, which acts as the Proton acceptor. The active site involves Glu236. Arg248 is a substrate binding site.

It belongs to the MetA family.

The protein localises to the cytoplasm. It catalyses the reaction L-homoserine + acetyl-CoA = O-acetyl-L-homoserine + CoA. The protein operates within amino-acid biosynthesis; L-methionine biosynthesis via de novo pathway; O-acetyl-L-homoserine from L-homoserine: step 1/1. Its function is as follows. Transfers an acetyl group from acetyl-CoA to L-homoserine, forming acetyl-L-homoserine. This chain is Homoserine O-acetyltransferase, found in Thermotoga petrophila (strain ATCC BAA-488 / DSM 13995 / JCM 10881 / RKU-1).